The following is a 501-amino-acid chain: Cytochrome P450 monooxygenase janQ (501 aa).

A helical membrane pass occupies residues 1–16 (MVLGLLAFIWLMRAWR). Residue Asn132 is glycosylated (N-linked (GlcNAc...) asparagine). Cys439 lines the heme pocket.

This sequence belongs to the cytochrome P450 family. Heme is required as a cofactor.

It localises to the membrane. It participates in secondary metabolite biosynthesis. Its function is as follows. Cytochrome P450 monooxygenase; part of the gene cluster that mediates the biosynthesis of the indole diterpenes janthitremanes such as shearinine K or shearinine A. The geranylgeranyl diphosphate (GGPP) synthase janG catalyzes the first step in janthitremane biosynthesis via conversion of farnesyl pyrophosphate and isopentyl pyrophosphate into geranylgeranyl pyrophosphate (GGPP). Condensation of indole-3-glycerol phosphate with GGPP by the prenyl transferase janC then forms 3-geranylgeranylindole (3-GGI). Epoxidation by the FAD-dependent monooxygenase janM leads to a epoxidized-GGI that is substrate of the terpene cyclase janB for cyclization to yield paspaline. Paspaline is subsequently converted to 13-desoxypaspaline by the cytochrome P450 monooxygenase janP, via beta-PC-M6 in a series of alpha-face oxidations. The cytochrome P450 monooxygenase janQ is proposed to carry out sequential beta-face oxidation steps at C-7 and C-13 of 13-desoxypaspaline to form paspalicine and paspalinine respectively. The indole diterpene prenyltransferase janD may then convert paspalinine into shearinine K which is substrate of janO and/or additional enzymes for oxidation and cyclization to generate shearinine A. The protein is Cytochrome P450 monooxygenase janQ of Penicillium janthinellum (Penicillium vitale).